The following is a 56-amino-acid chain: Large ribosomal subunit protein bL32 (56 aa).

Positions 1–16 are enriched in basic residues; that stretch reads MAVQKSKKSRAARGMR. The segment at 1–22 is disordered; the sequence is MAVQKSKKSRAARGMRRSHDAL.

Belongs to the bacterial ribosomal protein bL32 family.

In Photobacterium profundum (strain SS9), this protein is Large ribosomal subunit protein bL32.